We begin with the raw amino-acid sequence, 159 residues long: NAD(P)H-quinone oxidoreductase subunit I, chloroplastic (159 aa).

4Fe-4S ferredoxin-type domains follow at residues G55–N84 and K95–E124. [4Fe-4S] cluster contacts are provided by C64, C67, C70, C74, C104, C107, C110, and C114.

This sequence belongs to the complex I 23 kDa subunit family. In terms of assembly, NDH is composed of at least 16 different subunits, 5 of which are encoded in the nucleus. [4Fe-4S] cluster serves as cofactor.

It is found in the plastid. It localises to the chloroplast thylakoid membrane. The enzyme catalyses a plastoquinone + NADH + (n+1) H(+)(in) = a plastoquinol + NAD(+) + n H(+)(out). It catalyses the reaction a plastoquinone + NADPH + (n+1) H(+)(in) = a plastoquinol + NADP(+) + n H(+)(out). In terms of biological role, NDH shuttles electrons from NAD(P)H:plastoquinone, via FMN and iron-sulfur (Fe-S) centers, to quinones in the photosynthetic chain and possibly in a chloroplast respiratory chain. The immediate electron acceptor for the enzyme in this species is believed to be plastoquinone. Couples the redox reaction to proton translocation, and thus conserves the redox energy in a proton gradient. The sequence is that of NAD(P)H-quinone oxidoreductase subunit I, chloroplastic from Chara vulgaris (Common stonewort).